The following is a 382-amino-acid chain: 2-carboxy-1,4-naphthoquinone phytyltransferase, chloroplastic (382 aa).

The transit peptide at 1 to 66 (MVNFVSLCDI…RRNLRVRPIF (66 aa)) directs the protein to the chloroplast. A run of 8 helical transmembrane segments spans residues 99–119 (VALV…GLFL), 123–143 (YVTL…SNDV), 168–188 (TLAA…WTSL), 196–216 (ILLL…PFRL), 224–244 (PLCF…LLGS), 257–277 (VLSS…CSHF), 323–343 (ILPL…NLVS), and 361–381 (YYCV…LVIA).

The protein belongs to the MenA family. Type 2 subfamily.

Its subcellular location is the plastid. It localises to the chloroplast membrane. It catalyses the reaction 2-carboxy-1,4-naphthoquinone + phytyl diphosphate + H(+) = demethylphylloquinone + CO2 + diphosphate. In terms of biological role, involved in the synthesis of phylloquinone (vitamin K1). Catalyzes the transfer of a prenyl chain to 2-carboxy-1,4-naphthoquinone. This chain is 2-carboxy-1,4-naphthoquinone phytyltransferase, chloroplastic (ABC4), found in Arabidopsis thaliana (Mouse-ear cress).